A 586-amino-acid polypeptide reads, in one-letter code: MFS-type transporter ucsD (586 aa).

The segment at M1 to P56 is disordered. Low complexity-rich tracts occupy residues T19 to D36 and D46 to P56. 2 N-linked (GlcNAc...) asparagine glycosylation sites follow: N25 and N31. A run of 8 helical transmembrane segments spans residues W65 to I85, S101 to A121, W131 to N151, G164 to L184, G192 to L212, W220 to L240, A263 to Y283, and V290 to T310. N-linked (GlcNAc...) asparagine glycosylation is present at N324. Transmembrane regions (helical) follow at residues V330–I350, L368–F388, P393–D413, A420–L440, V458–F478, and L532–L552.

This sequence belongs to the major facilitator superfamily.

It is found in the membrane. MFS-type transporter; part of the gene cluster that mediates the biosynthesis of UCS1025A, a member of the pyrrolizidinone family that acts as a strong telomerase inhibitor and displays potent antibacterial and antitumor properties. These compounds share a hemiaminal-containing pyrrolizidinone core fused with a gamma-lactone, giving a furopyrrolizidine that is connected to a decalin fragment. The polypeptide is MFS-type transporter ucsD (Acremonium sp).